The chain runs to 477 residues: Alkaline phosphatase (477 aa).

Asp44 lines the Mg(2+) pocket. Residue Asp44 coordinates Zn(2+). Ser94 serves as the catalytic Phosphoserine intermediate. Asn124 is a glycosylation site (N-linked (GlcNAc...) asparagine). His155 and Thr157 together coordinate Mg(2+). A disulfide bridge connects residues Cys165 and Cys185. The N-linked (GlcNAc...) asparagine glycan is linked to Asn214. Residue Glu315 coordinates Mg(2+). Zn(2+) is bound by residues Asp320, His324, Asp361, and His362. N-linked (GlcNAc...) asparagine glycosylation is present at Asn413. Residue His437 participates in Zn(2+) binding.

In terms of assembly, homodimer. Requires Mg(2+) as cofactor. Zn(2+) is required as a cofactor.

It localises to the cell membrane. It carries out the reaction a phosphate monoester + H2O = an alcohol + phosphate. The chain is Alkaline phosphatase from Gadus morhua (Atlantic cod).